The chain runs to 142 residues: Small ribosomal subunit protein uS9 (142 aa).

This sequence belongs to the universal ribosomal protein uS9 family. Component of the small ribosomal subunit (SSU). Mature N.crassa ribosomes consist of a small (40S) and a large (60S) subunit. The 40S small subunit contains 1 molecule of ribosomal RNA (18S rRNA) and at least 32 different proteins. The large 60S subunit contains 3 rRNA molecules (26S, 5.8S and 5S rRNA) and at least 42 different proteins.

The protein resides in the cytoplasm. Component of the ribosome, a large ribonucleoprotein complex responsible for the synthesis of proteins in the cell. The small ribosomal subunit (SSU) binds messenger RNAs (mRNAs) and translates the encoded message by selecting cognate aminoacyl-transfer RNA (tRNA) molecules. The large subunit (LSU) contains the ribosomal catalytic site termed the peptidyl transferase center (PTC), which catalyzes the formation of peptide bonds, thereby polymerizing the amino acids delivered by tRNAs into a polypeptide chain. The nascent polypeptides leave the ribosome through a tunnel in the LSU and interact with protein factors that function in enzymatic processing, targeting, and the membrane insertion of nascent chains at the exit of the ribosomal tunnel. The chain is Small ribosomal subunit protein uS9 (rps-16) from Neurospora crassa (strain ATCC 24698 / 74-OR23-1A / CBS 708.71 / DSM 1257 / FGSC 987).